The chain runs to 170 residues: IMPACT family member YDL177C (170 aa).

The interval 79–98 (KKKGNKANKSNNSHVNKSRN) is disordered.

It belongs to the IMPACT family.

The polypeptide is IMPACT family member YDL177C (Saccharomyces cerevisiae (strain ATCC 204508 / S288c) (Baker's yeast)).